A 162-amino-acid polypeptide reads, in one-letter code: MNTKFPITAKGFKKLEHELKHLKHVERKKISEDIAEAREHGDLSENAEYEAAREKQAFIEGRIKELEDMTARAEIIDICKLSGDNIKFGATVTLIDDDTEEEVTYIIVGEYEADITKKRVSIASPIAKALIGKSVGDFVEVTTPKGLKSYEVVTVEYKELDL.

Residues 45-74 (ENAEYEAAREKQAFIEGRIKELEDMTARAE) are a coiled coil.

The protein belongs to the GreA/GreB family.

Necessary for efficient RNA polymerase transcription elongation past template-encoded arresting sites. The arresting sites in DNA have the property of trapping a certain fraction of elongating RNA polymerases that pass through, resulting in locked ternary complexes. Cleavage of the nascent transcript by cleavage factors such as GreA or GreB allows the resumption of elongation from the new 3'terminus. GreA releases sequences of 2 to 3 nucleotides. The protein is Transcription elongation factor GreA of Rickettsia prowazekii (strain Madrid E).